Reading from the N-terminus, the 310-residue chain is Protease HtpX homolog (310 aa).

The next 2 helical transmembrane spans lie at 7–27 (SVMLLTAMTAFLLIVGQLIGG) and 29–49 (AGMTFALIMAVGMNFFSYWYS). Residue H131 participates in Zn(2+) binding. E132 is a catalytic residue. Position 135 (H135) interacts with Zn(2+). The next 2 membrane-spanning stretches (helical) occupy residues 141 to 161 (ILIGTIAATMAGAVMFLASMA) and 178 to 198 (PLGFAGMLIMAILAPIGAALI). Residue E207 participates in Zn(2+) binding. The interval 277–310 (LTGARPQSGGAPSGPERTARNAEDSAKDFWDSLK) is disordered. Over residues 293 to 310 (RTARNAEDSAKDFWDSLK) the composition is skewed to basic and acidic residues.

It belongs to the peptidase M48B family. The cofactor is Zn(2+).

It is found in the cell inner membrane. The polypeptide is Protease HtpX homolog (Desulfatibacillum aliphaticivorans).